Consider the following 95-residue polypeptide: Aspartyl/glutamyl-tRNA(Asn/Gln) amidotransferase subunit C (95 aa).

It belongs to the GatC family. In terms of assembly, heterotrimer of A, B and C subunits.

It catalyses the reaction L-glutamyl-tRNA(Gln) + L-glutamine + ATP + H2O = L-glutaminyl-tRNA(Gln) + L-glutamate + ADP + phosphate + H(+). It carries out the reaction L-aspartyl-tRNA(Asn) + L-glutamine + ATP + H2O = L-asparaginyl-tRNA(Asn) + L-glutamate + ADP + phosphate + 2 H(+). In terms of biological role, allows the formation of correctly charged Asn-tRNA(Asn) or Gln-tRNA(Gln) through the transamidation of misacylated Asp-tRNA(Asn) or Glu-tRNA(Gln) in organisms which lack either or both of asparaginyl-tRNA or glutaminyl-tRNA synthetases. The reaction takes place in the presence of glutamine and ATP through an activated phospho-Asp-tRNA(Asn) or phospho-Glu-tRNA(Gln). This Caldanaerobacter subterraneus subsp. tengcongensis (strain DSM 15242 / JCM 11007 / NBRC 100824 / MB4) (Thermoanaerobacter tengcongensis) protein is Aspartyl/glutamyl-tRNA(Asn/Gln) amidotransferase subunit C.